Here is an 86-residue protein sequence, read N- to C-terminus: RQC P-site tRNA stabilizing factor (86 aa).

The S4 RNA-binding domain occupies 1–62 (MRLDKFLKVS…QKLVTVQVNE (62 aa)).

Belongs to the RqcP family. In terms of assembly, associates with stalled 50S ribosomal subunits. Binds to RqcH, 23S rRNA and the P-site tRNA. Does not require RqcH for association with 50S subunits. Crystallized 50S subunits are variously associated with an A/P-site tRNA with or without RqcH, as well as with P- and E-site tRNAs but no RqcH. Displaced from the 50S subunit by puromycin but not thiostrepton.

Key component of the ribosome quality control system (RQC), a ribosome-associated complex that mediates the extraction of incompletely synthesized nascent chains from stalled ribosomes and their subsequent degradation. RqcH recruits Ala-charged tRNA, and with RqcP directs the elongation of stalled nascent chains on 50S ribosomal subunits, leading to non-templated C-terminal alanine extensions (Ala tail). The Ala tail promotes nascent chain degradation. RqcP is associated with the translocation-like movement of the peptidyl-tRNA from the A-site into the P-site. RqcH, RqcP and charged tRNA(Ala) are necessary and sufficient to add an Ala tail to a model stalled nascent peptide; does not add Val. This Bacillus subtilis (strain 168) protein is RQC P-site tRNA stabilizing factor.